The chain runs to 542 residues: CTP synthase (542 aa).

An amidoligase domain region spans residues 1 to 265; it reads MTRYIFVTGG…DDFVVERFGL (265 aa). Ser-13 is a CTP binding site. Residue Ser-13 participates in UTP binding. Residues 14 to 19 and Asp-71 contribute to the ATP site; that span reads SLGKGI. Asp-71 and Glu-139 together coordinate Mg(2+). CTP-binding positions include 146–148, 186–191, and Lys-222; these read DIE and KTKPTQ. UTP-binding positions include 186–191 and Lys-222; that span reads KTKPTQ. The Glutamine amidotransferase type-1 domain maps to 290–541; the sequence is TIAMVGKYME…VKAALAQKNK (252 aa). An L-glutamine-binding site is contributed by Gly-351. Cys-378 serves as the catalytic Nucleophile; for glutamine hydrolysis. L-glutamine-binding positions include 379–382, Glu-402, and Arg-469; that span reads LGMQ. Residues His-514 and Glu-516 contribute to the active site.

It belongs to the CTP synthase family. As to quaternary structure, homotetramer.

The enzyme catalyses UTP + L-glutamine + ATP + H2O = CTP + L-glutamate + ADP + phosphate + 2 H(+). It carries out the reaction L-glutamine + H2O = L-glutamate + NH4(+). It catalyses the reaction UTP + NH4(+) + ATP = CTP + ADP + phosphate + 2 H(+). Its pathway is pyrimidine metabolism; CTP biosynthesis via de novo pathway; CTP from UDP: step 2/2. Its activity is regulated as follows. Allosterically activated by GTP, when glutamine is the substrate; GTP has no effect on the reaction when ammonia is the substrate. The allosteric effector GTP functions by stabilizing the protein conformation that binds the tetrahedral intermediate(s) formed during glutamine hydrolysis. Inhibited by the product CTP, via allosteric rather than competitive inhibition. Catalyzes the ATP-dependent amination of UTP to CTP with either L-glutamine or ammonia as the source of nitrogen. Regulates intracellular CTP levels through interactions with the four ribonucleotide triphosphates. The chain is CTP synthase from Pseudomonas putida (strain GB-1).